The sequence spans 570 residues: Proline--tRNA ligase (570 aa).

This sequence belongs to the class-II aminoacyl-tRNA synthetase family. ProS type 1 subfamily. As to quaternary structure, homodimer.

It is found in the cytoplasm. It catalyses the reaction tRNA(Pro) + L-proline + ATP = L-prolyl-tRNA(Pro) + AMP + diphosphate. Catalyzes the attachment of proline to tRNA(Pro) in a two-step reaction: proline is first activated by ATP to form Pro-AMP and then transferred to the acceptor end of tRNA(Pro). As ProRS can inadvertently accommodate and process non-cognate amino acids such as alanine and cysteine, to avoid such errors it has two additional distinct editing activities against alanine. One activity is designated as 'pretransfer' editing and involves the tRNA(Pro)-independent hydrolysis of activated Ala-AMP. The other activity is designated 'posttransfer' editing and involves deacylation of mischarged Ala-tRNA(Pro). The misacylated Cys-tRNA(Pro) is not edited by ProRS. In Neisseria meningitidis serogroup C / serotype 2a (strain ATCC 700532 / DSM 15464 / FAM18), this protein is Proline--tRNA ligase.